The primary structure comprises 106 residues: ATP-dependent Clp protease adapter protein ClpS (106 aa).

Belongs to the ClpS family. As to quaternary structure, binds to the N-terminal domain of the chaperone ClpA.

Functionally, involved in the modulation of the specificity of the ClpAP-mediated ATP-dependent protein degradation. This is ATP-dependent Clp protease adapter protein ClpS from Salmonella gallinarum (strain 287/91 / NCTC 13346).